A 159-amino-acid chain; its full sequence is Putative viral CXC chemokine 2 (159 aa).

2 cysteine pairs are disulfide-bonded: Cys-50-Cys-77 and Cys-52-Cys-93.

The protein belongs to the intercrine alpha (chemokine CxC) family.

The polypeptide is Putative viral CXC chemokine 2 (UL147) (Human cytomegalovirus (strain Merlin) (HHV-5)).